The sequence spans 340 residues: Cobalt-precorrin-5B C(1)-methyltransferase (340 aa).

Belongs to the CbiD family.

The catalysed reaction is Co-precorrin-5B + S-adenosyl-L-methionine = Co-precorrin-6A + S-adenosyl-L-homocysteine. The protein operates within cofactor biosynthesis; adenosylcobalamin biosynthesis; cob(II)yrinate a,c-diamide from sirohydrochlorin (anaerobic route): step 6/10. Catalyzes the methylation of C-1 in cobalt-precorrin-5B to form cobalt-precorrin-6A. The sequence is that of Cobalt-precorrin-5B C(1)-methyltransferase from Methanococcoides burtonii (strain DSM 6242 / NBRC 107633 / OCM 468 / ACE-M).